Consider the following 112-residue polypeptide: Prothymosin alpha (112 aa).

Methionine 1 is subject to N-acetylmethionine. The segment at 1-112 (MSDAAVDTSS…KKQKKTDEDD (112 aa)) is disordered. Serine 2 is modified (N-acetylserine; in Prothymosin alpha, N-terminally processed). A Phosphoserine modification is found at serine 2. The residue at position 8 (threonine 8) is a Phosphothreonine. Residues serine 9 and serine 10 each carry the phosphoserine modification. Threonine 13 and threonine 14 each carry phosphothreonine. A compositionally biased stretch (basic and acidic residues) spans 13 to 31 (TTKDLKEKKEVVEEAENGR). Lysine 15 carries the post-translational modification N6-acetyllysine; alternate. The residue at position 15 (lysine 15) is an N6-succinyllysine; alternate. Acidic residues predominate over residues 43–84 (ENGEQEADNEVDEEEEEGGEEEEEEEEGDGEEEDGDEDEEAE). Positions 101-112 (ETKKQKKTDEDD) are enriched in basic and acidic residues. Threonine 102 bears the Phosphothreonine mark. Lysine 103 bears the N6-acetyllysine; alternate mark. Residue lysine 103 forms a Glycyl lysine isopeptide (Lys-Gly) (interchain with G-Cter in SUMO2); alternate linkage. Threonine 108 is subject to Phosphothreonine.

The protein belongs to the pro/parathymosin family. Interacts with NUPR1; regulates apoptotic process. Covalently linked to a small RNA of about 20 nucleotides.

It is found in the nucleus. Its function is as follows. Prothymosin alpha may mediate immune function by conferring resistance to certain opportunistic infections. The chain is Prothymosin alpha (Ptma) from Rattus norvegicus (Rat).